Here is a 1166-residue protein sequence, read N- to C-terminus: MQIEERIVEGHLLAARTTPGNTRRISFAKITEPLEVPQLLSLQTDSFDWLVGNDKWNAAVERRRSEGEDVSSKSGLQEIFEEISPIEDFSETMSLSFENPVFYDPKYTVDECKEKDFTYSAPLYVSAEFTNNDTGEIKGQTVFMGDFPLMTDKGTFIINGTERVVVSQLVRSPGVYFERTADKTSDKDIYTAKLIPSRGAWLEFEIDKRDMVGVRLDRKRKQNVTVLLKALGWTNEQIREEFGEYESMMLTLEKDHTQGQDDALLDIYRKLRPGEPPTREAAQTLLNNYYFNPKRYDLAKVGRYKINKKLGLLEAFDQQTLTIDDVVAAIKYIVALHDGREQIEAPQGTLDISADDIDHFGNRRMRTVGELIQNQLRTGLARMERVVRERMTTQDVEAITPQSLINIRPVVAALKEFFGTSQLSQFMDQTNPIAGLTHKRRLSALGPGGLSRDRAGMEVRDVHPSHYGRMCPIETPEGPNIGLIGSLASYGRINPFGFVETPYRKVTKGKVTDQIDYLTADDEDRYVIAQANAALDDKSRFVEERVLVRQRDGEVSEVLADEVDYMDVSPRQMVSVATALIPFLEHDDANRALMGANMQRQAVPLIKSDSPLVGTGIEYRAAVDAGDVVVATAAGVVKEVSADVIETMNDDGTYSTYRLAKFKRSNQGTCINQRPLVSEGDRLEIGTPIADGPCTDEAEMALGTNLLVAFMPWQGHNYEDAIILSQRLVQEDILTSIHIEEHEVDARDTKLGPEEITRDIPNVSEEMLADLDERGIIRIGAEVTTGDVLVGKVTPKGETELTPEERLLRAIFGEKAREVRDTSMKVPHGESGTVIGVRVFDREDGDELPPGVNQLVRVYVAQKRKISVGDKLAGRHGNKGVIAKILPIEDMPFMEDGTPVDVVLNPLGVPRRMNIGQILELHLGWLAKQGWDLNLNDDKSGADWKQRLIKIHADKAEPGTKVATPVFDGAREDEITGLLGSTIPNRDGVRMIDNTGKASLFDGRSGEPFPEPVAVGYMYILKLHHLVDDKIHARSTGPYSMITQQPLGGKAQFGGQRFGEMEVWAMEAYGAAYALQELLTIKSDDVPGRVKVYEAIVKGENIPDSGIPESFKVLVKEMQSLCLNVEVLSQDGTAIEMRDAEEDVFRAAEELGIDLSRREPSSVEEV.

Belongs to the RNA polymerase beta chain family. As to quaternary structure, the RNAP catalytic core consists of 2 alpha, 1 beta, 1 beta' and 1 omega subunit. When a sigma factor is associated with the core the holoenzyme is formed, which can initiate transcription.

The enzyme catalyses RNA(n) + a ribonucleoside 5'-triphosphate = RNA(n+1) + diphosphate. DNA-dependent RNA polymerase catalyzes the transcription of DNA into RNA using the four ribonucleoside triphosphates as substrates. In Nocardioides sp. (strain ATCC BAA-499 / JS614), this protein is DNA-directed RNA polymerase subunit beta.